A 214-amino-acid polypeptide reads, in one-letter code: Imidazole glycerol phosphate synthase subunit HisH (214 aa).

The region spanning 3-211 is the Glutamine amidotransferase type-1 domain; it reads TIAVIDYDMG…VSKVIPKNLA (209 aa). Cys81 serves as the catalytic Nucleophile. Catalysis depends on residues His186 and Glu188.

As to quaternary structure, heterodimer of HisH and HisF.

The protein localises to the cytoplasm. It carries out the reaction 5-[(5-phospho-1-deoxy-D-ribulos-1-ylimino)methylamino]-1-(5-phospho-beta-D-ribosyl)imidazole-4-carboxamide + L-glutamine = D-erythro-1-(imidazol-4-yl)glycerol 3-phosphate + 5-amino-1-(5-phospho-beta-D-ribosyl)imidazole-4-carboxamide + L-glutamate + H(+). The enzyme catalyses L-glutamine + H2O = L-glutamate + NH4(+). The protein operates within amino-acid biosynthesis; L-histidine biosynthesis; L-histidine from 5-phospho-alpha-D-ribose 1-diphosphate: step 5/9. In terms of biological role, IGPS catalyzes the conversion of PRFAR and glutamine to IGP, AICAR and glutamate. The HisH subunit catalyzes the hydrolysis of glutamine to glutamate and ammonia as part of the synthesis of IGP and AICAR. The resulting ammonia molecule is channeled to the active site of HisF. The chain is Imidazole glycerol phosphate synthase subunit HisH from Trichodesmium erythraeum (strain IMS101).